Consider the following 211-residue polypeptide: Scoloptoxin SSD43 (211 aa).

Residues 1 to 20 (MNFVIYGVIVVLTSQLYVDG) form the signal peptide.

In terms of processing, contains 3 disulfide bonds. As to expression, expressed by the venom gland.

The protein localises to the secreted. Its function is as follows. Shows trypsin inhibiting activity. The protein is highly thermally stable, since its incubation in boiling water during 10 minutes does not reduce its activity. In Scolopendra dehaani (Thai centipede), this protein is Scoloptoxin SSD43.